A 427-amino-acid chain; its full sequence is 3-phosphoshikimate 1-carboxyvinyltransferase (427 aa).

Residues Lys23, Ser24, and Arg28 each coordinate 3-phosphoshikimate. Lys23 is a phosphoenolpyruvate binding site. 2 residues coordinate phosphoenolpyruvate: Gly97 and Arg125. Ser170, Ser171, Gln172, Ser198, Asp314, Asn337, and Lys341 together coordinate 3-phosphoshikimate. Gln172 lines the phosphoenolpyruvate pocket. Catalysis depends on Asp314, which acts as the Proton acceptor. Phosphoenolpyruvate contacts are provided by Arg345, Arg387, and Lys412.

Belongs to the EPSP synthase family. As to quaternary structure, monomer.

It localises to the cytoplasm. It catalyses the reaction 3-phosphoshikimate + phosphoenolpyruvate = 5-O-(1-carboxyvinyl)-3-phosphoshikimate + phosphate. It functions in the pathway metabolic intermediate biosynthesis; chorismate biosynthesis; chorismate from D-erythrose 4-phosphate and phosphoenolpyruvate: step 6/7. Catalyzes the transfer of the enolpyruvyl moiety of phosphoenolpyruvate (PEP) to the 5-hydroxyl of shikimate-3-phosphate (S3P) to produce enolpyruvyl shikimate-3-phosphate and inorganic phosphate. The sequence is that of 3-phosphoshikimate 1-carboxyvinyltransferase from Buchnera aphidicola subsp. Acyrthosiphon pisum (strain Tuc7).